A 270-amino-acid polypeptide reads, in one-letter code: Cbp/p300-interacting transactivator 2 (270 aa).

A disordered region spans residues 138 to 201 (LHPAAGHQMN…SGGGSGSGNM (64 aa)). Positions 165–198 (STPGGSGGSSTPGGSGSSSGGGAGSSNSGGGSGS) are enriched in gly residues.

The protein belongs to the CITED family. In terms of assembly, interacts (via C-terminus) with SMAD2. Interacts (via C-terminus) with SMAD3 (via MH2 domain). Interacts with LHX2 (via LIM domains). Interacts with WT1. Interacts (via C-terminus) with EP300 (via CH1 domain); the interaction is stimulated in response to hypoxia. Interacts with PPARA. Interacts (via C-terminus) with TFAP2A, TFAP2B and TFAP2C.

The protein localises to the nucleus. Its function is as follows. Transcriptional coactivator of the p300/CBP-mediated transcription complex. Acts as a bridge, linking TFAP2 transcription factors and the p300/CBP transcriptional coactivator complex in order to stimulate TFAP2-mediated transcriptional activation. Positively regulates TGF-beta signaling through its association with the SMAD/p300/CBP-mediated transcriptional coactivator complex. Stimulates the peroxisome proliferator-activated receptors PPARA transcriptional activity. Enhances estrogen-dependent transactivation mediated by estrogen receptors. Also acts as a transcriptional corepressor; interferes with the binding of the transcription factors HIF1A or STAT2 and the p300/CBP transcriptional coactivator complex. Participates in sex determination and early gonad development by stimulating transcription activation of SRY. Plays a role in controlling left-right patterning during embryogenesis; potentiates transcriptional activation of NODAL-mediated gene transcription in the left lateral plate mesoderm (LPM). Plays an essential role in differentiation of the adrenal cortex from the adrenogonadal primordium (AGP); stimulates WT1-mediated transcription activation thereby up-regulating the nuclear hormone receptor NR5A1 promoter activity. Associates with chromatin to the PITX2 P1 promoter region. In Homo sapiens (Human), this protein is Cbp/p300-interacting transactivator 2 (CITED2).